The chain runs to 652 residues: Maternal embryonic leucine zipper kinase (652 aa).

One can recognise a Protein kinase domain in the interval 13–265 (YELHETIGTG…VKHLLSHPWL (253 aa)). ATP-binding positions include 19–27 (IGTGGFAKV) and Lys-42. Residue Asp-134 is the Proton acceptor of the active site. Phosphothreonine; by autocatalysis is present on Thr-169. Ser-173 bears the Phosphoserine; by autocatalysis mark. Positions 284–323 (VDEDCVTELSVFYKCSRTSTSRLISEWNYDHITASYLLLH) are UBA-like. Positions 328 to 652 (HGKPVRLKRP…VEDILSSCKV (325 aa)) are autoinhibitory region. 5 positions are modified to phosphothreonine: Thr-415, Thr-450, Thr-452, Thr-482, and Thr-484. The segment at 443–492 (FLHPAPWTPTPRRKQNEKKGILTTPNKNSHTKEKNQSKETPTKKPITTGE) is disordered. Residues 472–484 (HTKEKNQSKETPT) show a composition bias toward basic and acidic residues. Phosphoserine occurs at positions 499, 506, and 518. The KA1 domain maps to 603 to 652 (SDFGKVTMQFELEVCQLSKSEMVGIRRQRLKGDAWVYKRLVEDILSSCKV).

It belongs to the protein kinase superfamily. CAMK Ser/Thr protein kinase family. SNF1 subfamily. In terms of processing, autophosphorylated: autophosphorylation of the T-loop at Thr-169 and Ser-173 is required for activation. Phosphorylated by the maturation promoting factor (MPF), composed of cdk1 and a cyclin-B. Also phosphorylated by some MAPK. Phosphorylated during oocyte maturation. Dephosphorylation destabilizes the protein. Degraded when cells exit mitosis.

The protein resides in the cell membrane. It catalyses the reaction L-seryl-[protein] + ATP = O-phospho-L-seryl-[protein] + ADP + H(+). It carries out the reaction L-threonyl-[protein] + ATP = O-phospho-L-threonyl-[protein] + ADP + H(+). Its activity is regulated as follows. Activated by autophosphorylation of the T-loop at Thr-169 and Ser-173: in contrast to other members of the SNF1 subfamily, phosphorylation at Thr-169 is not mediated by STK11/LKB1 but via autophosphorylation instead. In terms of biological role, serine/threonine-protein kinase involved in various processes such as cell cycle regulation, self-renewal of stem cells, apoptosis and splicing regulation. Also plays a role in primitive hematopoiesis, possibly by affecting the expression of genes critical for hematopoiesis. Plays a role in cytokinesis during early development. This chain is Maternal embryonic leucine zipper kinase (melk), found in Xenopus tropicalis (Western clawed frog).